The primary structure comprises 287 residues: Pantothenate synthetase (287 aa).

30–37 lines the ATP pocket; the sequence is MGNLHSGH. His-37 serves as the catalytic Proton donor. Gln-61 serves as a coordination point for (R)-pantoate. Gln-61 provides a ligand contact to beta-alanine. 149–152 contributes to the ATP binding site; sequence GEKD. Residue Gln-155 participates in (R)-pantoate binding. ATP contacts are provided by residues Val-178 and 186 to 189; that span reads LSSR.

This sequence belongs to the pantothenate synthetase family. As to quaternary structure, homodimer.

Its subcellular location is the cytoplasm. It carries out the reaction (R)-pantoate + beta-alanine + ATP = (R)-pantothenate + AMP + diphosphate + H(+). The protein operates within cofactor biosynthesis; (R)-pantothenate biosynthesis; (R)-pantothenate from (R)-pantoate and beta-alanine: step 1/1. In terms of biological role, catalyzes the condensation of pantoate with beta-alanine in an ATP-dependent reaction via a pantoyl-adenylate intermediate. The sequence is that of Pantothenate synthetase from Pseudomonas putida (strain ATCC 47054 / DSM 6125 / CFBP 8728 / NCIMB 11950 / KT2440).